We begin with the raw amino-acid sequence, 152 residues long: Transcriptional repressor NrdR (152 aa).

Residues 3 to 34 fold into a zinc finger; the sequence is CPFCNHGELKVIDSRNAPEANAIKRRRECLNC. Residues 48 to 138 enclose the ATP-cone domain; the sequence is LQVLKRDGRY…VYRRFKDVGE (91 aa).

The protein belongs to the NrdR family. Requires Zn(2+) as cofactor.

Negatively regulates transcription of bacterial ribonucleotide reductase nrd genes and operons by binding to NrdR-boxes. In Chlamydia abortus (strain DSM 27085 / S26/3) (Chlamydophila abortus), this protein is Transcriptional repressor NrdR.